A 376-amino-acid polypeptide reads, in one-letter code: MPARRSAARIDFAGSPRPTLGVEWEFALVDSQTRDLSNEATAVIAEIGENPRVHKELLRNTVEIVSGICECTAEAMQDLRDTLGPARQIVRDRGMELFCAGTHPFARWSAQKLTDAPRYAELIKRTQWWGRQMLIWGVHVHVGIRSAHKVMPIMTSLLNYYPHLLALSASSPWWGGEDTGYASNRAMMFQQLPTAGLPFHFQRWAEFEGFVYDQKKTGIIDHMDEIRWDIRPSPHLGTLEVRICDGVSNLRELGALVALTHCLIVDLDRRLDAGETLPTMPPWHVQENKWRAARYGLDAVIILDADSNERLVTDDLADVLTRLEPVAKSLNCADELAAVSDIYRDGASYQRQLRVAQQHDGDLRAVVDALVAELVI.

The protein belongs to the glutamate--cysteine ligase type 2 family. YbdK subfamily.

The catalysed reaction is L-cysteine + L-glutamate + ATP = gamma-L-glutamyl-L-cysteine + ADP + phosphate + H(+). Its function is as follows. ATP-dependent carboxylate-amine ligase which exhibits weak glutamate--cysteine ligase activity. The sequence is that of Putative glutamate--cysteine ligase 2 from Mycobacterium bovis (strain ATCC BAA-935 / AF2122/97).